A 198-amino-acid polypeptide reads, in one-letter code: dITP/XTP pyrophosphatase (198 aa).

Position 7-12 (7-12 (THNPHK)) interacts with substrate. Mg(2+) contacts are provided by Glu40 and Asp69. The active-site Proton acceptor is the Asp69. Residues Thr70, 151–154 (FGYD), Lys174, and 179–180 (HR) contribute to the substrate site.

The protein belongs to the HAM1 NTPase family. As to quaternary structure, homodimer. Mg(2+) serves as cofactor.

It catalyses the reaction XTP + H2O = XMP + diphosphate + H(+). The catalysed reaction is dITP + H2O = dIMP + diphosphate + H(+). The enzyme catalyses ITP + H2O = IMP + diphosphate + H(+). In terms of biological role, pyrophosphatase that catalyzes the hydrolysis of nucleoside triphosphates to their monophosphate derivatives, with a high preference for the non-canonical purine nucleotides XTP (xanthosine triphosphate), dITP (deoxyinosine triphosphate) and ITP. Seems to function as a house-cleaning enzyme that removes non-canonical purine nucleotides from the nucleotide pool, thus preventing their incorporation into DNA/RNA and avoiding chromosomal lesions. The sequence is that of dITP/XTP pyrophosphatase from Thermoanaerobacter pseudethanolicus (strain ATCC 33223 / 39E) (Clostridium thermohydrosulfuricum).